A 188-amino-acid chain; its full sequence is CASP-like protein 4B3 (188 aa).

Residues 1-21 (MSFSPASSEPHDAPAAAGSSV) form a disordered region. The Cytoplasmic portion of the chain corresponds to 1-42 (MSFSPASSEPHDAPAAAGSSVPASRSIAERWKMEAAPIRARL). The chain crosses the membrane as a helical span at residues 43 to 63 (LLRAFAWLFSLLALVVMATDV). Topologically, residues 64 to 76 (HGRGGAQDFSTYP) are extracellular. A helical membrane pass occupies residues 77–97 (EYNYCLGMSIIALLYATAQLV). The Cytoplasmic segment spans residues 98 to 114 (RDAHRLSSGRDLVAGRK). A helical membrane pass occupies residues 115–135 (AAAVVDFAGDQVVAYSLISGL). Residues 136–156 (SAAAPVTDYMRQATDNLFNDS) are Extracellular-facing. N-linked (GlcNAc...) asparagine glycosylation is present at Asn154. The helical transmembrane segment at 157 to 177 (AAAAISLAFFAFLAISLSALI) threads the bilayer. Residues 178-188 (SGYNLSLEAIV) are Cytoplasmic-facing.

Belongs to the Casparian strip membrane proteins (CASP) family. As to quaternary structure, homodimer and heterodimers.

Its subcellular location is the cell membrane. This chain is CASP-like protein 4B3, found in Hordeum vulgare subsp. vulgare (Domesticated barley).